We begin with the raw amino-acid sequence, 181 residues long: Adenine phosphoribosyltransferase (181 aa).

This sequence belongs to the purine/pyrimidine phosphoribosyltransferase family. Homodimer.

The protein localises to the cytoplasm. The enzyme catalyses AMP + diphosphate = 5-phospho-alpha-D-ribose 1-diphosphate + adenine. It functions in the pathway purine metabolism; AMP biosynthesis via salvage pathway; AMP from adenine: step 1/1. Catalyzes a salvage reaction resulting in the formation of AMP, that is energically less costly than de novo synthesis. In Aliivibrio fischeri (strain ATCC 700601 / ES114) (Vibrio fischeri), this protein is Adenine phosphoribosyltransferase.